A 451-amino-acid polypeptide reads, in one-letter code: UDP-glucosyltransferase 74AE2 (451 aa).

Catalysis depends on H17, which acts as the Proton acceptor. H17 is a binding site for an anthocyanidin. The active-site Charge relay is D108. T130, Q330, H345, W348, N349, S350, E353, D369, and Q370 together coordinate UDP-alpha-D-glucose.

It belongs to the UDP-glycosyltransferase family. As to expression, expressed at higher levels in roots than in leaves.

It carries out the reaction (20S)-ginsenoside C-K + UDP-alpha-D-glucose = (20S)-ginsenoside F2 + UDP + H(+). The catalysed reaction is (20S)-protopanaxadiol + UDP-alpha-D-glucose = (20S)-ginsenoside Rh2 + UDP + H(+). It participates in secondary metabolite biosynthesis; terpenoid biosynthesis. Its function is as follows. Component of the dammarane-type triterpene saponins (e.g. PPD-type ginsenosides or panaxosides) biosynthetic pathway. Glycosyltransferase that catalyzes the biosynthesis of ginsenoside Rh2 from protopanaxadiol (PPD) and the conversion of compound K to ginsenoside F2. This is UDP-glucosyltransferase 74AE2 from Panax ginseng (Korean ginseng).